The sequence spans 255 residues: Proteasome subunit alpha (255 aa).

This sequence belongs to the peptidase T1A family. As to quaternary structure, the 20S proteasome core is composed of 14 alpha and 14 beta subunits that assemble into four stacked heptameric rings, resulting in a barrel-shaped structure. The two inner rings, each composed of seven catalytic beta subunits, are sandwiched by two outer rings, each composed of seven alpha subunits. The catalytic chamber with the active sites is on the inside of the barrel. Has a gated structure, the ends of the cylinder being occluded by the N-termini of the alpha-subunits. Is capped at one or both ends by the proteasome regulatory ATPase, PAN.

It is found in the cytoplasm. Its activity is regulated as follows. The formation of the proteasomal ATPase PAN-20S proteasome complex, via the docking of the C-termini of PAN into the intersubunit pockets in the alpha-rings, triggers opening of the gate for substrate entry. Interconversion between the open-gate and close-gate conformations leads to a dynamic regulation of the 20S proteasome proteolysis activity. Component of the proteasome core, a large protease complex with broad specificity involved in protein degradation. In Natronomonas pharaonis (strain ATCC 35678 / DSM 2160 / CIP 103997 / JCM 8858 / NBRC 14720 / NCIMB 2260 / Gabara) (Halobacterium pharaonis), this protein is Proteasome subunit alpha.